The primary structure comprises 213 residues: NDR1/HIN1-like protein 26 (213 aa).

Topologically, residues 1-27 (MSQISITSPKHCAKKGGININNRHKKL) are cytoplasmic. A helical membrane pass occupies residues 28 to 48 (FFTFSTFFSGLLLIIFLVWLI). Residues 49–213 (LHPERPEFSL…LQGTRCSTTI (165 aa)) lie on the Lumenal side of the membrane. 3 N-linked (GlcNAc...) asparagine glycosylation sites follow: asparagine 67, asparagine 77, and asparagine 195.

In terms of tissue distribution, expressed in the vasculature of roots, rosette leaves, stems, cauline leaves and flowers. Specifically expressed in phloem.

The protein localises to the cell junction. It localises to the plasmodesma. It is found in the endoplasmic reticulum membrane. Its function is as follows. Involved in the regulation of sugar, amino acid and some primary metabolite export from companion cells (CCs) to sieve elements (SEs) in phloem. Required for apoplastic phloem sugar loading in source leaves in order to transport it to sink tissues. Required for correct sugar partitioning between source leaves and sink organs. This chain is NDR1/HIN1-like protein 26, found in Arabidopsis thaliana (Mouse-ear cress).